A 485-amino-acid polypeptide reads, in one-letter code: Bifunctional protein HldE (485 aa).

Residues M1–N326 are ribokinase. N195–E198 contributes to the ATP binding site. The active site involves D271. The segment at F354 to T485 is cytidylyltransferase.

In the N-terminal section; belongs to the carbohydrate kinase PfkB family. This sequence in the C-terminal section; belongs to the cytidylyltransferase family. Homodimer.

It carries out the reaction D-glycero-beta-D-manno-heptose 7-phosphate + ATP = D-glycero-beta-D-manno-heptose 1,7-bisphosphate + ADP + H(+). It catalyses the reaction D-glycero-beta-D-manno-heptose 1-phosphate + ATP + H(+) = ADP-D-glycero-beta-D-manno-heptose + diphosphate. It participates in nucleotide-sugar biosynthesis; ADP-L-glycero-beta-D-manno-heptose biosynthesis; ADP-L-glycero-beta-D-manno-heptose from D-glycero-beta-D-manno-heptose 7-phosphate: step 1/4. Its pathway is nucleotide-sugar biosynthesis; ADP-L-glycero-beta-D-manno-heptose biosynthesis; ADP-L-glycero-beta-D-manno-heptose from D-glycero-beta-D-manno-heptose 7-phosphate: step 3/4. In terms of biological role, catalyzes the phosphorylation of D-glycero-D-manno-heptose 7-phosphate at the C-1 position to selectively form D-glycero-beta-D-manno-heptose-1,7-bisphosphate. Functionally, catalyzes the ADP transfer from ATP to D-glycero-beta-D-manno-heptose 1-phosphate, yielding ADP-D-glycero-beta-D-manno-heptose. The chain is Bifunctional protein HldE from Granulibacter bethesdensis (strain ATCC BAA-1260 / CGDNIH1).